Reading from the N-terminus, the 141-residue chain is Ribonuclease VapC38 (141 aa).

Positions 5 and 102 each coordinate Mg(2+).

The protein belongs to the PINc/VapC protein family. The cofactor is Mg(2+).

It localises to the secreted. In terms of biological role, toxic component of a type II toxin-antitoxin (TA) system. An RNase. Its cognate antitoxin is VapB38. The protein is Ribonuclease VapC38 of Mycobacterium tuberculosis (strain ATCC 25618 / H37Rv).